Consider the following 135-residue polypeptide: MSTTPAAGVLDTSVFIATESGRQLDEALIPDRVATTVVTLAELRVGVLAAATTDIRAQRLATLESVADMETLPVDDDAARMWARLRIHLAESGRRVRINDLWIAAVAASRALPVITQDDDFAALDGAASVEIIRV.

Positions 9–130 constitute a PINc domain; sequence VLDTSVFIAT…FAALDGAASV (122 aa). Asp-11 and Asp-100 together coordinate Mg(2+).

It belongs to the PINc/VapC protein family. In terms of assembly, forms a complex with VapB5. Mg(2+) serves as cofactor.

It localises to the secreted. Functionally, probable toxic component of a type II toxin-antitoxin (TA) system. The cognate antitoxin is VapB5. Has limited RNase activity on substrates; activity is seen with a VapC5-VapB5 complex. This is Ribonuclease VapC5 from Mycobacterium tuberculosis (strain ATCC 25618 / H37Rv).